A 469-amino-acid chain; its full sequence is Glutamate--tRNA ligase (469 aa).

The short motif at 11–21 (PSPTGFIHLGN) is the 'HIGH' region element. Positions 114 to 131 (QREAGEKPRYDGTWRPEP) are enriched in basic and acidic residues. A disordered region spans residues 114 to 139 (QREAGEKPRYDGTWRPEPGKVLPEPP). Positions 243-247 (KMSKR) match the 'KMSKS' region motif. An ATP-binding site is contributed by Lys-246.

The protein belongs to the class-I aminoacyl-tRNA synthetase family. Glutamate--tRNA ligase type 1 subfamily. As to quaternary structure, monomer.

It is found in the cytoplasm. The enzyme catalyses tRNA(Glu) + L-glutamate + ATP = L-glutamyl-tRNA(Glu) + AMP + diphosphate. Catalyzes the attachment of glutamate to tRNA(Glu) in a two-step reaction: glutamate is first activated by ATP to form Glu-AMP and then transferred to the acceptor end of tRNA(Glu). The sequence is that of Glutamate--tRNA ligase from Paraburkholderia xenovorans (strain LB400).